Consider the following 423-residue polypeptide: AP-1 complex subunit mu-2 (423 aa).

Residues 168–421 (KNEVFIDVIE…ITQSGDYQLR (254 aa)) enclose the MHD domain.

This sequence belongs to the adaptor complexes medium subunit family. Adaptor protein complex 1 (AP-1) is a heterotetramer composed of two large adaptins (gamma-type subunit AP1G1 and beta-type subunit AP1B1), a medium adaptin (mu-type subunit AP1M1 or AP1M2) and a small adaptin (sigma-type subunit AP1S1 or AP1S2 or AP1S3). Interacts with P2X4. In terms of processing, phosphorylation of membrane-bound AP1M1/AP1M2 increases its affinity for sorting signals.

The protein localises to the golgi apparatus. It localises to the cytoplasmic vesicle. Its subcellular location is the clathrin-coated vesicle membrane. Subunit of clathrin-associated adaptor protein complex 1 that plays a role in protein sorting in the trans-Golgi network (TGN) and endosomes. The AP complexes mediate the recruitment of clathrin to membranes and the recognition of sorting signals within the cytosolic tails of transmembrane cargo molecules. The polypeptide is AP-1 complex subunit mu-2 (Ap1m2) (Mus musculus (Mouse)).